Consider the following 117-residue polypeptide: Ribosome-binding factor A (117 aa).

The protein belongs to the RbfA family. As to quaternary structure, monomer. Binds 30S ribosomal subunits, but not 50S ribosomal subunits or 70S ribosomes.

It localises to the cytoplasm. Its function is as follows. One of several proteins that assist in the late maturation steps of the functional core of the 30S ribosomal subunit. Associates with free 30S ribosomal subunits (but not with 30S subunits that are part of 70S ribosomes or polysomes). Required for efficient processing of 16S rRNA. May interact with the 5'-terminal helix region of 16S rRNA. In Blochmanniella floridana, this protein is Ribosome-binding factor A.